Reading from the N-terminus, the 819-residue chain is Aminopeptidase O (819 aa).

Residue histidine 479 participates in Zn(2+) binding. The Proton acceptor role is filled by glutamate 480. Zn(2+) contacts are provided by histidine 483 and glutamate 502. The Nucleolar localization signal motif lies at 689–699 (RRPRKRKRREK).

The protein belongs to the peptidase M1 family. Requires Zn(2+) as cofactor.

It localises to the nucleus. Its subcellular location is the nucleolus. The protein localises to the cytoplasm. In terms of biological role, aminopeptidase which catalyzes the hydrolysis of amino acid residues from the N-terminus of peptide or protein substrates. The protein is Aminopeptidase O of Homo sapiens (Human).